A 155-amino-acid chain; its full sequence is Riboflavin synthase (155 aa).

It belongs to the DMRL synthase family.

The enzyme catalyses 2 6,7-dimethyl-8-(1-D-ribityl)lumazine + H(+) = 5-amino-6-(D-ribitylamino)uracil + riboflavin. It participates in cofactor biosynthesis; riboflavin biosynthesis; riboflavin from 2-hydroxy-3-oxobutyl phosphate and 5-amino-6-(D-ribitylamino)uracil: step 2/2. This Aeropyrum pernix (strain ATCC 700893 / DSM 11879 / JCM 9820 / NBRC 100138 / K1) protein is Riboflavin synthase (ribC).